The chain runs to 123 residues: MSDIAEPETHAPADDQLLIFTDAAADKVRELLDGEEGGDVKLRVFITGGGCSGFQYGFTFDETVEEGDTIIEKRGVKIVVDPVSGIYLQGAEVDFSSGLEGEQFIIRNPNATTTCGCGSSFAI.

Iron-sulfur cluster-binding residues include C51, C115, and C117.

This sequence belongs to the HesB/IscA family. As to quaternary structure, homodimer. Requires iron-sulfur cluster as cofactor.

Its function is as follows. Required for insertion of 4Fe-4S clusters for at least IspG. This is Iron-sulfur cluster insertion protein ErpA from Halorhodospira halophila (strain DSM 244 / SL1) (Ectothiorhodospira halophila (strain DSM 244 / SL1)).